Here is a 289-residue protein sequence, read N- to C-terminus: Acetyl-coenzyme A carboxylase carboxyl transferase subunit beta (289 aa).

One can recognise a CoA carboxyltransferase N-terminal domain in the interval 28–289 (VMTKCPKCKK…QGGEMAVWQS (262 aa)). Positions 32, 35, 51, and 54 each coordinate Zn(2+). The segment at 32–54 (CPKCKKIMYTKEVLKNLKVCVNC) adopts a C4-type zinc-finger fold.

Belongs to the AccD/PCCB family. In terms of assembly, acetyl-CoA carboxylase is a heterohexamer composed of biotin carboxyl carrier protein (AccB), biotin carboxylase (AccC) and two subunits each of ACCase subunit alpha (AccA) and ACCase subunit beta (AccD). The cofactor is Zn(2+).

The protein resides in the cytoplasm. The catalysed reaction is N(6)-carboxybiotinyl-L-lysyl-[protein] + acetyl-CoA = N(6)-biotinyl-L-lysyl-[protein] + malonyl-CoA. It functions in the pathway lipid metabolism; malonyl-CoA biosynthesis; malonyl-CoA from acetyl-CoA: step 1/1. Functionally, component of the acetyl coenzyme A carboxylase (ACC) complex. Biotin carboxylase (BC) catalyzes the carboxylation of biotin on its carrier protein (BCCP) and then the CO(2) group is transferred by the transcarboxylase to acetyl-CoA to form malonyl-CoA. This Bacillus anthracis (strain A0248) protein is Acetyl-coenzyme A carboxylase carboxyl transferase subunit beta.